A 341-amino-acid polypeptide reads, in one-letter code: Putative NADPH-dependent methylglyoxal reductase GRP2 (341 aa).

NADP(+) contacts are provided by lysine 40 and tyrosine 171.

This sequence belongs to the NAD(P)-dependent epimerase/dehydratase family. Dihydroflavonol-4-reductase subfamily.

The protein localises to the cytoplasm. It carries out the reaction (S)-lactaldehyde + NADP(+) = methylglyoxal + NADPH + H(+). Functionally, catalyzes the irreversible reduction of the cytotoxic compound methylglyoxal (MG, 2-oxopropanal) to (S)-lactaldehyde. MG is synthesized via a bypath of glycolysis from dihydroxyacetone phosphate and is believed to play a role in cell cycle regulation and stress adaptation. The chain is Putative NADPH-dependent methylglyoxal reductase GRP2 (GRP2) from Candida albicans (strain SC5314 / ATCC MYA-2876) (Yeast).